Here is a 149-residue protein sequence, read N- to C-terminus: Macrodomain Ter protein (149 aa).

Belongs to the MatP family. As to quaternary structure, homodimer.

The protein localises to the cytoplasm. Its function is as follows. Required for spatial organization of the terminus region of the chromosome (Ter macrodomain) during the cell cycle. Prevents early segregation of duplicated Ter macrodomains during cell division. Binds specifically to matS, which is a 13 bp signature motif repeated within the Ter macrodomain. This Vibrio cholerae serotype O1 (strain ATCC 39315 / El Tor Inaba N16961) protein is Macrodomain Ter protein.